The primary structure comprises 487 residues: N-succinylglutamate 5-semialdehyde dehydrogenase (487 aa).

Position 221–226 (221–226) interacts with NAD(+); that stretch reads GSSDTG. Catalysis depends on residues E244 and C278.

Belongs to the aldehyde dehydrogenase family. AstD subfamily.

The enzyme catalyses N-succinyl-L-glutamate 5-semialdehyde + NAD(+) + H2O = N-succinyl-L-glutamate + NADH + 2 H(+). The protein operates within amino-acid degradation; L-arginine degradation via AST pathway; L-glutamate and succinate from L-arginine: step 4/5. Functionally, catalyzes the NAD-dependent reduction of succinylglutamate semialdehyde into succinylglutamate. This chain is N-succinylglutamate 5-semialdehyde dehydrogenase, found in Burkholderia multivorans (strain ATCC 17616 / 249).